Here is a 359-residue protein sequence, read N- to C-terminus: Alanine racemase (359 aa).

The active-site Proton acceptor; specific for D-alanine is K35. Residue K35 is modified to N6-(pyridoxal phosphate)lysine. R130 serves as a coordination point for substrate. Y255 functions as the Proton acceptor; specific for L-alanine in the catalytic mechanism. Residue M303 participates in substrate binding.

Belongs to the alanine racemase family. It depends on pyridoxal 5'-phosphate as a cofactor.

It catalyses the reaction L-alanine = D-alanine. It participates in amino-acid biosynthesis; D-alanine biosynthesis; D-alanine from L-alanine: step 1/1. In terms of biological role, catalyzes the interconversion of L-alanine and D-alanine. May also act on other amino acids. This chain is Alanine racemase (alr), found in Janthinobacterium sp. (strain Marseille) (Minibacterium massiliensis).